Reading from the N-terminus, the 277-residue chain is Nickel import ATP-binding protein NikE (277 aa).

Positions 14–253 constitute an ABC transporter domain; that stretch reads YRTVSLVGRS…EHPASRALQR (240 aa). 46–53 contacts ATP; sequence GRSGSGKS.

This sequence belongs to the ABC transporter superfamily. Nickel importer (TC 3.A.1.5.3) family. The complex is composed of two ATP-binding proteins (NikD and NikE), two transmembrane proteins (NikB and NikC) and a solute-binding protein (NikA).

The protein localises to the cell inner membrane. The enzyme catalyses Ni(2+)(out) + ATP + H2O = Ni(2+)(in) + ADP + phosphate + H(+). Its function is as follows. Part of the ABC transporter complex NikABCDE involved in nickel import. Responsible for energy coupling to the transport system. The chain is Nickel import ATP-binding protein NikE from Rhodospirillum rubrum (strain ATCC 11170 / ATH 1.1.1 / DSM 467 / LMG 4362 / NCIMB 8255 / S1).